Consider the following 217-residue polypeptide: Phosphoenolpyruvate guanylyltransferase (217 aa).

The phosphoenolpyruvate site is built by T150, G165, and S168.

This sequence belongs to the CofC family.

It carries out the reaction phosphoenolpyruvate + GTP + H(+) = enolpyruvoyl-2-diphospho-5'-guanosine + diphosphate. It participates in cofactor biosynthesis; coenzyme F420 biosynthesis. Its function is as follows. Guanylyltransferase that catalyzes the activation of phosphoenolpyruvate (PEP) as enolpyruvoyl-2-diphospho-5'-guanosine, via the condensation of PEP with GTP. It is involved in the biosynthesis of coenzyme F420, a hydride carrier cofactor. The polypeptide is Phosphoenolpyruvate guanylyltransferase (Mycobacterium ulcerans (strain Agy99)).